The following is a 1042-amino-acid chain: MDKILEGLVSSSHPLPLKRMIVRKVVEFAEHWLDEAQCEAMFDLTTRLILEGQDPFQRQVGHQVLEAYARYHRPEFESFFNKTFVLGLLQQGYHSVDRKDVAILDYIHNGLKLIMSCPSVLDLFSLLQVEVLRMVCERPEPVLCARLSDLLTDFVQCVPKGKLSVTFCQQLVRTIGHFQCVSTQEKELREYVSQVTKVSTLLQNIWKAEPSTLLPSLQEVFASISSTDASFEPSVALASLVQHIPLQMITVLIRSLTTDPNVKDASMTQALCRMIDWLSWPLAQHVDTWVIALLKGLAAVQKFTILIDVTLLKIELVFNRLWFPLVRPGALAVLSHMLLSFQHSPEAFHVIVPHIVNLVHSFRSDGLPSSTAFLVQLTELVHCMMYHYSGFPDLYEPILEAVKDFPKPSEEKIKLILNQSAWTSQSNALASCLSRLSGKSETGKTGLINLGNTCYMNSVLQALFMATEFRRQVLSLNLNGCNSLMKKLQHLFAFLAHTQREAYAPRIFFEASRPPWFTPRSQQDCSEYLRFLLDRLHEEEKILRVQSSHKPSEGLDCAETCLQEVTSKVAVPTESPGTGDSEKTLIEKMFGGKLRTHICCLNCGSTSHKVEAFTDLSLAFCPSPSVEDLSFQDTASLPSAQDDGLMQTSVADPEEEPVVYNPATAAFVCDSVVNQRVLGSPPVEFHCAESSSVPEESAKILISKDVPQNPGGESTTSVTDLLNYFLAPEVLTGENQYYCESCASLQNAEKTMQITEEPEYLILTLLRFSYDQKYHVRRKILDNVSLPLVLELPVKRTASFSSLSQSWSVDVDFTDINENLPKKLKPSGTEEAFCPKLVPYLLSSVVVHSGVSSESGHYYSYARNITGTESSYQMCPQSESLALAPSQSCLLGVESPNTVIEQDLENKEMSQEWFLFNDSRVTFTSFQSVQKITSRFPKDTAYVLLYKKQSRANGIDSDNPASGVWANGDPPLQKELMDAITKDNKLYLQEQELNARARALQAASASCSFRPNGFDDNDPPGSCGPTGGGGGGGFNTVGRLVF.

Residues 445 to 949 (TGLINLGNTC…TAYVLLYKKQ (505 aa)) form the USP domain. Cysteine 454 functions as the Nucleophile in the catalytic mechanism. Histidine 857 (proton acceptor) is an active-site residue.

Belongs to the peptidase C19 family. In terms of assembly, interacts with isoform 1 of FBXW7; this interaction prevents FBXW7-mediated degradation of MYC.

It localises to the cytoplasm. Its subcellular location is the nucleus. It carries out the reaction Thiol-dependent hydrolysis of ester, thioester, amide, peptide and isopeptide bonds formed by the C-terminal Gly of ubiquitin (a 76-residue protein attached to proteins as an intracellular targeting signal).. Its function is as follows. Deubiquitinating enzyme that plays a role in various cellular processes, including DNA repair, cell cycle regulation, and immune response. Plays a role in the inhibition of type I interferon signaling by mediating the 'Lys-33' to 'Lys-48' ubiquitination transition of TBK1 leading to its degradation. Cleaves the ubiquitin chain from the histone demethylase LSD1/KDM1A and prevents it from degradation by the 26S proteasome, thus maintaining LSD1 protein level in cells. Plays a role in the DNA damage response by regulating the deacetylase activity of HDAC1. Mechanistically, removes the 'Lys-63'-linked ubiquitin chain promoting the deacetylase activity of HDAC1 in response to DNA damage. Also acts as a specific deubiquitinase of histone deacetylase 3/HDAC3 and cleaves its 'Lys-63'-linked ubiquitin chains to lower its histone deacetylase activity. Regulates MYC levels and cell proliferation via antagonizing ubiquitin E3 ligase FBXW7 thereby preventing MYC 'Lys-48'-linked ubiquitination and degradation. Participates in antiviral response by removing both 'Lys-48'-linked and 'Lys-63'-linked polyubiquitination of Zika virus envelope protein E. Constitutively associated with IL-33R/IL1RL1, deconjugates its 'Lys-27'-linked polyubiquitination resulting in its autophagic degradation. This chain is Ubiquitin carboxyl-terminal hydrolase 38 (Usp38), found in Mus musculus (Mouse).